Consider the following 359-residue polypeptide: Mitochondrial calcium uniporter regulator 1 (359 aa).

Over 1 to 68 (MDCGSVGGQR…ARGGVSRASP (68 aa)) the chain is Mitochondrial intermembrane. Residues 69 to 85 (LLLLLLVPSPRLAAAAP) form a helical membrane-spanning segment. Topologically, residues 86-338 (RRQLGDWERS…LESHKLDNIK (253 aa)) are mitochondrial matrix. The stretch at 235-310 (EKSEFSALRA…VALHAQQDRA (76 aa)) forms a coiled coil. A helical transmembrane segment spans residues 339 to 358 (YLAGSIFTCLTVALGFYRLW). A topological domain (mitochondrial intermembrane) is located at residue isoleucine 359.

The protein belongs to the CCDC90 family. In terms of assembly, interacts (via coiled coil regions) with MCU; the interaction is direct. Interacts with SMDT1/EMRE; the interaction is direct. Interacts with PPIF. As to expression, ubiquitously expressed.

It is found in the mitochondrion inner membrane. Functionally, key regulator of mitochondrial calcium uniporter (MCU) required for calcium entry into mitochondrion. Plays a direct role in uniporter-mediated calcium uptake via a direct interaction with MCU. Probably involved in the assembly of the membrane components of the uniporter complex (uniplex). The sequence is that of Mitochondrial calcium uniporter regulator 1 from Homo sapiens (Human).